A 435-amino-acid polypeptide reads, in one-letter code: uncharacterized protein (435 aa).

S47 is modified (phosphoserine). Disordered regions lie at residues 174-210 (LKKKKESIKTAQTTEAQGADHNEEDEEDEEDEEDDED) and 290-372 (KAEA…EDNK). Residues 195 to 210 (NEEDEEDEEDEEDDED) show a composition bias toward acidic residues. Residues 290-304 (KAEATGEAHSKDVSA) show a composition bias toward basic and acidic residues. Polar residues predominate over residues 308–318 (SANTTTSFDET). Composition is skewed to basic and acidic residues over residues 322–340 (EDEKPKSEGAEEESKKEAN) and 347–361 (VADRKEDLKSNKVND).

It localises to the cytoplasm. This is an uncharacterized protein from Saccharomyces cerevisiae (strain ATCC 204508 / S288c) (Baker's yeast).